We begin with the raw amino-acid sequence, 305 residues long: Porphobilinogen deaminase (305 aa).

An S-(dipyrrolylmethanemethyl)cysteine modification is found at Cys243.

Belongs to the HMBS family. In terms of assembly, monomer. It depends on dipyrromethane as a cofactor.

The enzyme catalyses 4 porphobilinogen + H2O = hydroxymethylbilane + 4 NH4(+). It functions in the pathway porphyrin-containing compound metabolism; protoporphyrin-IX biosynthesis; coproporphyrinogen-III from 5-aminolevulinate: step 2/4. Its function is as follows. Tetrapolymerization of the monopyrrole PBG into the hydroxymethylbilane pre-uroporphyrinogen in several discrete steps. In Limosilactobacillus reuteri (strain DSM 20016) (Lactobacillus reuteri), this protein is Porphobilinogen deaminase.